The sequence spans 459 residues: Cysteine--tRNA ligase (459 aa).

C28 provides a ligand contact to Zn(2+). The short motif at 30–40 (VTVYDLCHFGH) is the 'HIGH' region element. Zn(2+) is bound by residues C209, H234, and E238. Positions 266–270 (KMSKS) match the 'KMSKS' region motif. K269 serves as a coordination point for ATP.

The protein belongs to the class-I aminoacyl-tRNA synthetase family. In terms of assembly, monomer. Zn(2+) is required as a cofactor.

The protein resides in the cytoplasm. The catalysed reaction is tRNA(Cys) + L-cysteine + ATP = L-cysteinyl-tRNA(Cys) + AMP + diphosphate. The sequence is that of Cysteine--tRNA ligase from Actinobacillus succinogenes (strain ATCC 55618 / DSM 22257 / CCUG 43843 / 130Z).